Reading from the N-terminus, the 238-residue chain is Probable succinyl-CoA:3-ketoacid coenzyme A transferase subunit A (238 aa).

24 to 30 (GGFGLCG) contacts CoA.

It belongs to the 3-oxoacid CoA-transferase subunit A family. As to quaternary structure, heterodimer of a subunit A and a subunit B.

It carries out the reaction a 3-oxo acid + succinyl-CoA = a 3-oxoacyl-CoA + succinate. The sequence is that of Probable succinyl-CoA:3-ketoacid coenzyme A transferase subunit A (scoA) from Bacillus subtilis (strain 168).